We begin with the raw amino-acid sequence, 530 residues long: Bifunctional purine biosynthesis protein PurH (530 aa).

The MGS-like domain occupies 1–148 (MNNPRPIRRA…KNHKDVTIVV (148 aa)).

The protein belongs to the PurH family.

It catalyses the reaction (6R)-10-formyltetrahydrofolate + 5-amino-1-(5-phospho-beta-D-ribosyl)imidazole-4-carboxamide = 5-formamido-1-(5-phospho-D-ribosyl)imidazole-4-carboxamide + (6S)-5,6,7,8-tetrahydrofolate. The catalysed reaction is IMP + H2O = 5-formamido-1-(5-phospho-D-ribosyl)imidazole-4-carboxamide. It functions in the pathway purine metabolism; IMP biosynthesis via de novo pathway; 5-formamido-1-(5-phospho-D-ribosyl)imidazole-4-carboxamide from 5-amino-1-(5-phospho-D-ribosyl)imidazole-4-carboxamide (10-formyl THF route): step 1/1. Its pathway is purine metabolism; IMP biosynthesis via de novo pathway; IMP from 5-formamido-1-(5-phospho-D-ribosyl)imidazole-4-carboxamide: step 1/1. This chain is Bifunctional purine biosynthesis protein PurH, found in Aliivibrio salmonicida (strain LFI1238) (Vibrio salmonicida (strain LFI1238)).